Consider the following 283-residue polypeptide: 2-dehydro-3-deoxyphosphooctonate aldolase (283 aa).

Belongs to the KdsA family.

Its subcellular location is the cytoplasm. It carries out the reaction D-arabinose 5-phosphate + phosphoenolpyruvate + H2O = 3-deoxy-alpha-D-manno-2-octulosonate-8-phosphate + phosphate. It participates in carbohydrate biosynthesis; 3-deoxy-D-manno-octulosonate biosynthesis; 3-deoxy-D-manno-octulosonate from D-ribulose 5-phosphate: step 2/3. The protein operates within bacterial outer membrane biogenesis; lipopolysaccharide biosynthesis. The sequence is that of 2-dehydro-3-deoxyphosphooctonate aldolase from Vibrio parahaemolyticus serotype O3:K6 (strain RIMD 2210633).